Reading from the N-terminus, the 381-residue chain is MDTEMSVNMSDFLHDQATRAPESLQQSYILMEDLYERKLWKQLTDALIVFFDTPETVPLRLPLYTNFVNSFRPNINQLKAVYMGLKAFESCSNDEALRNLNQIVNELDEEKYKDAYVYSIVAIARIKLISGKLDEARELLVKASKIIDHIDYVESLIHSSYYSVSADYYKAKADYAQYYRHCLLYLSCIDLDKCSHTELVERAVDLSVAAILGDIYNFGELLLHPVFELLVGTQHEWLHDLVIAMNVGDLPLFERLMGQINKMPLLQSSVALLGQKIRLMALIELVFQLPPNQRTLTFDTIARATRIPSNEVELLIMRALSVGLITGVIDEVTQIVTISSVQSRILNHSQIASMESRLREWNQNIKNLSNVVEISGKGVFV.

Residues 177 to 343 (QYYRHCLLYL…QIVTISSVQS (167 aa)) form the PCI domain.

Belongs to the proteasome subunit S11 family.

Its function is as follows. Acts as a regulatory subunit of the 26S proteasome which is involved in the ATP-dependent degradation of ubiquitinated proteins. This chain is Probable 26S proteasome regulatory subunit rpn9 (rpn9), found in Schizosaccharomyces pombe (strain 972 / ATCC 24843) (Fission yeast).